A 46-amino-acid chain; its full sequence is Iota-conotoxin-like Fi11.8 (46 aa).

4-hydroxyproline occurs at positions 2 and 11. Disulfide bonds link Cys5/Cys19, Cys12/Cys22, Cys18/Cys27, and Cys21/Cys38. A 4-hydroxyproline modification is found at Pro29. Trp33 carries the post-translational modification 6'-bromotryptophan. At Phe44 the chain carries D-phenylalanine.

This sequence belongs to the conotoxin I1 superfamily. In terms of tissue distribution, expressed by the venom duct.

It is found in the secreted. Iota-conotoxins bind to voltage-gated sodium channels (Nav) and act as agonists by shifting the voltage-dependence of activation to more hyperpolarized levels. Produces general excitatory symptoms. The sequence is that of Iota-conotoxin-like Fi11.8 from Conus figulinus (Fig cone).